A 988-amino-acid polypeptide reads, in one-letter code: Kinesin-like protein CIN8 (988 aa).

Residues 33 to 470 (NILVAVRCRG…LEYASKAKNI (438 aa)) enclose the Kinesin motor domain. 125–132 (GMTSTGKT) is an ATP binding site. Residues 206–301 (FDSNVNGTSA…NSNNTNQQQS (96 aa)) are disordered. The span at 208–237 (SNVNGTSASGSSSRSSSRNNSPRSAPDNSR) shows a compositional bias: low complexity. Positions 248-280 (HNTTGNSKISNNNHNKFSRFKQTSQESTRAHAS) are enriched in polar residues. The segment covering 281 to 301 (NNHQNVHIPNNNSNNTNQQQS) has biased composition (low complexity). 2 coiled-coil regions span residues 514–619 (EHYK…ELQQ) and 707–769 (KLAE…MQNF). Residues 965 to 974 (ALQEKRKPED) are compositionally biased toward basic and acidic residues. Residues 965-988 (ALQEKRKPEDEVLLQAKLQRRNPD) form a disordered region.

Belongs to the TRAFAC class myosin-kinesin ATPase superfamily. Kinesin family. BimC subfamily.

It is found in the cytoplasm. The protein localises to the cytoskeleton. It localises to the spindle. Elongates the mitotic spindle by interacting with spindle microtubules to generate an outward force pushing spindle poles apart. Following spindle assembly, CIN8 and KIP1 apparently act to oppose a force, possibly generated by KAR3, that draws separated poles back together. The sequence is that of Kinesin-like protein CIN8 (CIN8) from Candida glabrata (strain ATCC 2001 / BCRC 20586 / JCM 3761 / NBRC 0622 / NRRL Y-65 / CBS 138) (Yeast).